A 434-amino-acid chain; its full sequence is ATP-dependent RNA helicase sub2 (434 aa).

The short motif at Thr-59 to Gln-87 is the Q motif element. The region spanning Ile-90–Val-265 is the Helicase ATP-binding domain. An ATP-binding site is contributed by Ala-103–Thr-110. Positions Asp-212–Asp-215 match the DECD box motif. Residues Lys-293–Ser-430 enclose the Helicase C-terminal domain.

It belongs to the DEAD box helicase family. DECD subfamily.

Its subcellular location is the nucleus. It carries out the reaction ATP + H2O = ADP + phosphate + H(+). Functionally, ATP-binding RNA helicase involved in transcription elongation and required for the export of mRNA out of the nucleus. SUB2 also plays a role in pre-mRNA splicing and spliceosome assembly. May be involved in rDNA and telomeric silencing, and maintenance of genome integrity. The chain is ATP-dependent RNA helicase sub2 (sub2) from Emericella nidulans (strain FGSC A4 / ATCC 38163 / CBS 112.46 / NRRL 194 / M139) (Aspergillus nidulans).